The primary structure comprises 154 residues: SsrA-binding protein (154 aa).

Positions 135 to 154 (KREDLKRRQDQRDMARAMKR) are disordered.

This sequence belongs to the SmpB family.

The protein resides in the cytoplasm. Required for rescue of stalled ribosomes mediated by trans-translation. Binds to transfer-messenger RNA (tmRNA), required for stable association of tmRNA with ribosomes. tmRNA and SmpB together mimic tRNA shape, replacing the anticodon stem-loop with SmpB. tmRNA is encoded by the ssrA gene; the 2 termini fold to resemble tRNA(Ala) and it encodes a 'tag peptide', a short internal open reading frame. During trans-translation Ala-aminoacylated tmRNA acts like a tRNA, entering the A-site of stalled ribosomes, displacing the stalled mRNA. The ribosome then switches to translate the ORF on the tmRNA; the nascent peptide is terminated with the 'tag peptide' encoded by the tmRNA and targeted for degradation. The ribosome is freed to recommence translation, which seems to be the essential function of trans-translation. This is SsrA-binding protein from Microcystis aeruginosa (strain NIES-843 / IAM M-2473).